A 193-amino-acid polypeptide reads, in one-letter code: ATP-dependent Clp protease proteolytic subunit (193 aa).

S98 acts as the Nucleophile in catalysis. Residue H123 is part of the active site.

This sequence belongs to the peptidase S14 family. Fourteen ClpP subunits assemble into 2 heptameric rings which stack back to back to give a disk-like structure with a central cavity, resembling the structure of eukaryotic proteasomes.

It is found in the cytoplasm. The catalysed reaction is Hydrolysis of proteins to small peptides in the presence of ATP and magnesium. alpha-casein is the usual test substrate. In the absence of ATP, only oligopeptides shorter than five residues are hydrolyzed (such as succinyl-Leu-Tyr-|-NHMec, and Leu-Tyr-Leu-|-Tyr-Trp, in which cleavage of the -Tyr-|-Leu- and -Tyr-|-Trp bonds also occurs).. Cleaves peptides in various proteins in a process that requires ATP hydrolysis. Has a chymotrypsin-like activity. Plays a major role in the degradation of misfolded proteins. The chain is ATP-dependent Clp protease proteolytic subunit from Agathobacter rectalis (strain ATCC 33656 / DSM 3377 / JCM 17463 / KCTC 5835 / VPI 0990) (Eubacterium rectale).